A 610-amino-acid polypeptide reads, in one-letter code: UvrABC system protein C (610 aa).

Residues 16-94 (SQPGVYRMYD…IKLYQPRYNV (79 aa)) enclose the GIY-YIG domain. Positions 204-239 (DQVLTQLISRMETASQNLEFEEAARIRDQIQAVRRV) constitute a UVR domain.

It belongs to the UvrC family. As to quaternary structure, interacts with UvrB in an incision complex.

Its subcellular location is the cytoplasm. Functionally, the UvrABC repair system catalyzes the recognition and processing of DNA lesions. UvrC both incises the 5' and 3' sides of the lesion. The N-terminal half is responsible for the 3' incision and the C-terminal half is responsible for the 5' incision. The protein is UvrABC system protein C of Escherichia coli (strain SMS-3-5 / SECEC).